Consider the following 340-residue polypeptide: Deubiquitinase SseL (340 aa).

H222 is a catalytic residue. Catalysis depends on C284, which acts as the Nucleophile.

Belongs to the peptidase C79 family.

It localises to the secreted. It is found in the host cytoplasm. Functionally, effector proteins function to alter host cell physiology and promote bacterial survival in host tissues. This protease targets the host cell ubiquitin pathway by acting as a deubiquitinase in infected host cells. This is Deubiquitinase SseL (sseL) from Salmonella arizonae (strain ATCC BAA-731 / CDC346-86 / RSK2980).